The sequence spans 199 residues: Probable GTP-binding protein EngB (199 aa).

One can recognise an EngB-type G domain in the interval 22–196 (NWPEFAFSGR…GKFILDLVDS (175 aa)). Residues 30–37 (GRSNVGKS), 57–61 (GRTQS), 75–78 (DLPG), 142–145 (TKVD), and 175–177 (FSA) each bind GTP. Residues serine 37 and threonine 59 each contribute to the Mg(2+) site.

Belongs to the TRAFAC class TrmE-Era-EngA-EngB-Septin-like GTPase superfamily. EngB GTPase family. Requires Mg(2+) as cofactor.

Necessary for normal cell division and for the maintenance of normal septation. The chain is Probable GTP-binding protein EngB from Halothermothrix orenii (strain H 168 / OCM 544 / DSM 9562).